We begin with the raw amino-acid sequence, 276 residues long: NADPH-dependent 7-cyano-7-deazaguanine reductase (276 aa).

83-85 contacts substrate; it reads IES. 85–86 lines the NADPH pocket; the sequence is SK. The active-site Thioimide intermediate is cysteine 184. Residue aspartate 191 is the Proton donor of the active site. Residue 223–224 participates in substrate binding; sequence HE. An NADPH-binding site is contributed by 252 to 253; sequence RG.

The protein belongs to the GTP cyclohydrolase I family. QueF type 2 subfamily. In terms of assembly, homodimer.

Its subcellular location is the cytoplasm. The enzyme catalyses 7-aminomethyl-7-carbaguanine + 2 NADP(+) = 7-cyano-7-deazaguanine + 2 NADPH + 3 H(+). It participates in tRNA modification; tRNA-queuosine biosynthesis. Catalyzes the NADPH-dependent reduction of 7-cyano-7-deazaguanine (preQ0) to 7-aminomethyl-7-deazaguanine (preQ1). This Pseudomonas putida (strain ATCC 47054 / DSM 6125 / CFBP 8728 / NCIMB 11950 / KT2440) protein is NADPH-dependent 7-cyano-7-deazaguanine reductase.